The primary structure comprises 445 residues: tRNA modification GTPase MnmE (445 aa).

(6S)-5-formyl-5,6,7,8-tetrahydrofolate contacts are provided by arginine 21, glutamate 78, and lysine 117. In terms of domain architecture, TrmE-type G spans 213-370 (GFRIALVGAP…LKETLSERVV (158 aa)). GTP is bound by residues 223–228 (NAGKST), 242–248 (TATPGTT), and 267–270 (DTAG). Serine 227 and threonine 248 together coordinate Mg(2+). Position 445 (lysine 445) interacts with (6S)-5-formyl-5,6,7,8-tetrahydrofolate.

This sequence belongs to the TRAFAC class TrmE-Era-EngA-EngB-Septin-like GTPase superfamily. TrmE GTPase family. As to quaternary structure, homodimer. Heterotetramer of two MnmE and two MnmG subunits. K(+) is required as a cofactor.

The protein resides in the cytoplasm. In terms of biological role, exhibits a very high intrinsic GTPase hydrolysis rate. Involved in the addition of a carboxymethylaminomethyl (cmnm) group at the wobble position (U34) of certain tRNAs, forming tRNA-cmnm(5)s(2)U34. The polypeptide is tRNA modification GTPase MnmE (Phenylobacterium zucineum (strain HLK1)).